The primary structure comprises 280 residues: Phosphatidylserine decarboxylase proenzyme (280 aa).

Catalysis depends on charge relay system; for autoendoproteolytic cleavage activity residues aspartate 88, histidine 144, and serine 247. Serine 247 acts as the Schiff-base intermediate with substrate; via pyruvic acid; for decarboxylase activity in catalysis. Serine 247 carries the post-translational modification Pyruvic acid (Ser); by autocatalysis.

The protein belongs to the phosphatidylserine decarboxylase family. PSD-B subfamily. Prokaryotic type I sub-subfamily. Heterodimer of a large membrane-associated beta subunit and a small pyruvoyl-containing alpha subunit. Pyruvate is required as a cofactor. In terms of processing, is synthesized initially as an inactive proenzyme. Formation of the active enzyme involves a self-maturation process in which the active site pyruvoyl group is generated from an internal serine residue via an autocatalytic post-translational modification. Two non-identical subunits are generated from the proenzyme in this reaction, and the pyruvate is formed at the N-terminus of the alpha chain, which is derived from the carboxyl end of the proenzyme. The autoendoproteolytic cleavage occurs by a canonical serine protease mechanism, in which the side chain hydroxyl group of the serine supplies its oxygen atom to form the C-terminus of the beta chain, while the remainder of the serine residue undergoes an oxidative deamination to produce ammonia and the pyruvoyl prosthetic group on the alpha chain. During this reaction, the Ser that is part of the protease active site of the proenzyme becomes the pyruvoyl prosthetic group, which constitutes an essential element of the active site of the mature decarboxylase.

Its subcellular location is the cell membrane. The catalysed reaction is a 1,2-diacyl-sn-glycero-3-phospho-L-serine + H(+) = a 1,2-diacyl-sn-glycero-3-phosphoethanolamine + CO2. It functions in the pathway phospholipid metabolism; phosphatidylethanolamine biosynthesis; phosphatidylethanolamine from CDP-diacylglycerol: step 2/2. In terms of biological role, catalyzes the formation of phosphatidylethanolamine (PtdEtn) from phosphatidylserine (PtdSer). This is Phosphatidylserine decarboxylase proenzyme from Xanthomonas axonopodis pv. citri (strain 306).